An 891-amino-acid polypeptide reads, in one-letter code: Alanine--tRNA ligase (891 aa).

The Zn(2+) site is built by His-574, His-578, Cys-676, and His-680.

The protein belongs to the class-II aminoacyl-tRNA synthetase family. Requires Zn(2+) as cofactor.

The protein resides in the cytoplasm. It carries out the reaction tRNA(Ala) + L-alanine + ATP = L-alanyl-tRNA(Ala) + AMP + diphosphate. Functionally, catalyzes the attachment of alanine to tRNA(Ala) in a two-step reaction: alanine is first activated by ATP to form Ala-AMP and then transferred to the acceptor end of tRNA(Ala). Also edits incorrectly charged Ser-tRNA(Ala) and Gly-tRNA(Ala) via its editing domain. The polypeptide is Alanine--tRNA ligase (Synechococcus sp. (strain WH7803)).